Here is a 246-residue protein sequence, read N- to C-terminus: Large ribosomal subunit protein uL2 (246 aa).

The tract at residues 197–227 is disordered; that stretch reads SPYAHPHGGGSHQKGGTPVPKTAPPGQKVGF.

Belongs to the universal ribosomal protein uL2 family. Part of the 50S ribosomal subunit. Forms a bridge to the 30S subunit in the 70S ribosome.

One of the primary rRNA binding proteins. Required for association of the 30S and 50S subunits to form the 70S ribosome, for tRNA binding and peptide bond formation. It has been suggested to have peptidyltransferase activity; this is somewhat controversial. Makes several contacts with the 16S rRNA in the 70S ribosome. The sequence is that of Large ribosomal subunit protein uL2 from Pyrobaculum aerophilum (strain ATCC 51768 / DSM 7523 / JCM 9630 / CIP 104966 / NBRC 100827 / IM2).